Here is a 149-residue protein sequence, read N- to C-terminus: MSTNNCTFKDRCVSILCCKFCKQVLSSRGMKAVLLADTDIDLYSTDIPPTNTVDFIGRCYFTGIHKCKLKDIACLKCGNIVGYHVIVPCSSCLLSCNNGHFWMFHSQAVYGINRLDSTGVNFLLWGNLPETEECTDEEMLEISAEEYIR.

The protein belongs to the FAM72 family. As to quaternary structure, interacts with UNG. Expressed at high levels in stomach and also in kidney and, at low levels, in heart (at protein level). In the stomach, highly expressed in foveolar cells, parietal cells and chief cells (at protein level). In kidney, expressed in endothelial cells, mesangial and epithelial cells (parietal and visceral epithelium) around glomerulus (at protein level).

The protein resides in the cytoplasm. It localises to the mitochondrion. In terms of biological role, may play a role in the regulation of cellular reactive oxygen species metabolism. May participate in cell growth regulation. This is Protein FAM72A (Fam72a) from Rattus norvegicus (Rat).